We begin with the raw amino-acid sequence, 717 residues long: Fatty acid oxidation complex subunit alpha (717 aa).

Positions 1-189 (MIYQSPTIEV…NVGAIDALVA (189 aa)) are enoyl-CoA hydratase/isomerase. Asp296 is a binding site for substrate. The interval 311–717 (KKVNSAAVLG…ANNGSYYQQA (407 aa)) is 3-hydroxyacyl-CoA dehydrogenase. NAD(+)-binding positions include Met324, Asp343, 400 to 402 (VVE), Lys407, and Ser429. The active-site For 3-hydroxyacyl-CoA dehydrogenase activity is the His450. Asn453 provides a ligand contact to NAD(+). Residues Asn500 and Tyr660 each coordinate substrate.

This sequence in the N-terminal section; belongs to the enoyl-CoA hydratase/isomerase family. The protein in the C-terminal section; belongs to the 3-hydroxyacyl-CoA dehydrogenase family. Heterotetramer of two alpha chains (FadB) and two beta chains (FadA).

It catalyses the reaction a (3S)-3-hydroxyacyl-CoA + NAD(+) = a 3-oxoacyl-CoA + NADH + H(+). It carries out the reaction a (3S)-3-hydroxyacyl-CoA = a (2E)-enoyl-CoA + H2O. The catalysed reaction is a 4-saturated-(3S)-3-hydroxyacyl-CoA = a (3E)-enoyl-CoA + H2O. The enzyme catalyses (3S)-3-hydroxybutanoyl-CoA = (3R)-3-hydroxybutanoyl-CoA. It catalyses the reaction a (3Z)-enoyl-CoA = a 4-saturated (2E)-enoyl-CoA. It carries out the reaction a (3E)-enoyl-CoA = a 4-saturated (2E)-enoyl-CoA. It functions in the pathway lipid metabolism; fatty acid beta-oxidation. Involved in the aerobic and anaerobic degradation of long-chain fatty acids via beta-oxidation cycle. Catalyzes the formation of 3-oxoacyl-CoA from enoyl-CoA via L-3-hydroxyacyl-CoA. It can also use D-3-hydroxyacyl-CoA and cis-3-enoyl-CoA as substrate. The chain is Fatty acid oxidation complex subunit alpha from Shewanella piezotolerans (strain WP3 / JCM 13877).